Consider the following 48-residue polypeptide: Large ribosomal subunit protein bL32 (48 aa).

Residues 1–20 (MAVPKRRVSKTRAAKRRTHY) show a composition bias toward basic residues. The disordered stretch occupies residues 1–48 (MAVPKRRVSKTRAAKRRTHYKVSLPIPVKDKDGSWKLPHRINTKTGEY).

Belongs to the bacterial ribosomal protein bL32 family.

The protein is Large ribosomal subunit protein bL32 of Campylobacter hominis (strain ATCC BAA-381 / DSM 21671 / CCUG 45161 / LMG 19568 / NCTC 13146 / CH001A).